A 296-amino-acid chain; its full sequence is 2-haloacid dehalogenase, configuration-inverting (296 aa).

The protein belongs to the HAD-like hydrolase superfamily. S-2-haloalkanoic acid dehalogenase family.

It carries out the reaction an (S)-2-haloacid + H2O = a (2R)-2-hydroxycarboxylate + a halide anion + H(+). The catalysed reaction is an (R)-2-haloacid + H2O = a (2S)-2-hydroxycarboxylate + a halide anion + H(+). In terms of biological role, dehalogenates both (S)- and (R)-2-haloalkanoic acids to the corresponding (R)- and (S)-hydroxyalkanoic acids, respectively, with inversion of configuration at C-2. Acts on 2-haloalkanoic acids whose carbon chain lengths are five or less. The polypeptide is 2-haloacid dehalogenase, configuration-inverting (dhlC) (Alcaligenes xylosoxydans xylosoxydans (Achromobacter xylosoxidans)).